The sequence spans 236 residues: DNA repair protein RecO (236 aa).

This sequence belongs to the RecO family.

Its function is as follows. Involved in DNA repair and RecF pathway recombination. The sequence is that of DNA repair protein RecO from Stutzerimonas stutzeri (strain A1501) (Pseudomonas stutzeri).